Here is a 359-residue protein sequence, read N- to C-terminus: 2-amino-3-carboxymuconate-6-semialdehyde decarboxylase (359 aa).

Positions methionine 1–threonine 13 are enriched in low complexity. The segment at methionine 1–lysine 21 is disordered. Residues histidine 29 and histidine 31 each coordinate Zn(2+). Arginine 70 is a substrate binding site. Zn(2+) contacts are provided by histidine 197 and aspartate 314.

The protein belongs to the metallo-dependent hydrolases superfamily. ACMSD family. Monomer.

It catalyses the reaction 2-amino-3-carboxymuconate 6-semialdehyde + H(+) = 2-aminomuconate 6-semialdehyde + CO2. Its pathway is secondary metabolite metabolism; quinolate metabolism. In terms of biological role, converts alpha-amino-beta-carboxymuconate-epsilon-semialdehyde (ACMS) to alpha-aminomuconate semialdehyde (AMS). The sequence is that of 2-amino-3-carboxymuconate-6-semialdehyde decarboxylase (acmsd) from Dictyostelium discoideum (Social amoeba).